Reading from the N-terminus, the 469-residue chain is ATP synthase subunit beta (469 aa).

155–162 (GGAGVGKT) contacts ATP.

The protein belongs to the ATPase alpha/beta chains family. As to quaternary structure, F-type ATPases have 2 components, CF(1) - the catalytic core - and CF(0) - the membrane proton channel. CF(1) has five subunits: alpha(3), beta(3), gamma(1), delta(1), epsilon(1). CF(0) has three main subunits: a(1), b(2) and c(9-12). The alpha and beta chains form an alternating ring which encloses part of the gamma chain. CF(1) is attached to CF(0) by a central stalk formed by the gamma and epsilon chains, while a peripheral stalk is formed by the delta and b chains.

The protein resides in the cell inner membrane. It catalyses the reaction ATP + H2O + 4 H(+)(in) = ADP + phosphate + 5 H(+)(out). Produces ATP from ADP in the presence of a proton gradient across the membrane. The catalytic sites are hosted primarily by the beta subunits. This chain is ATP synthase subunit beta, found in Helicobacter pylori (strain P12).